The following is a 553-amino-acid chain: HTH-type transcriptional regulator SgrR (553 aa).

The HTH marR-type domain maps to 1–117 (MSTARLQQQF…LSQLGRSFRQ (117 aa)). Residues 26–49 (LQELAEVLCCSRRHVRSLLGSMQQ) constitute a DNA-binding region (H-T-H motif). The tract at residues 163–494 (ELEPDLSHHW…EELHQDVELW (332 aa)) is solute-binding.

Activates the small RNA gene sgrS under glucose-phosphate stress conditions as well as yfdZ. Represses its own transcription under both stress and non-stress conditions. Might act as a sensor of the intracellular accumulation of phosphoglucose by binding these molecules in its C-terminal solute-binding domain. The polypeptide is HTH-type transcriptional regulator SgrR (Yersinia enterocolitica serotype O:8 / biotype 1B (strain NCTC 13174 / 8081)).